The sequence spans 312 residues: Serine acetyltransferase 5 (312 aa).

Basic and acidic residues predominate over residues 1–17 (MPPAGELRHQSPSKEKL). Residues 1–25 (MPPAGELRHQSPSKEKLSSVTQSDE) form a disordered region.

Belongs to the transferase hexapeptide repeat family. As to quaternary structure, homomultimer. In terms of tissue distribution, mostly expressed in stems, flowers and siliques. Localized in vascular tissues, particularly in phloem.

It is found in the cytoplasm. It catalyses the reaction L-serine + acetyl-CoA = O-acetyl-L-serine + CoA. It participates in amino-acid biosynthesis; L-cysteine biosynthesis; L-cysteine from L-serine: step 1/2. Its activity is regulated as follows. Feedback inhibitions by L-Ser and acetyl-CoA. This chain is Serine acetyltransferase 5 (SAT5), found in Arabidopsis thaliana (Mouse-ear cress).